The sequence spans 132 residues: Iron-sulfur cluster assembly 1 homolog, mitochondrial (132 aa).

The transit peptide at 1 to 15 (MASSASSVVRATVRA) directs the protein to the mitochondrion. 3 residues coordinate Fe cation: Cys60, Cys124, and Cys126.

This sequence belongs to the HesB/IscA family. As to quaternary structure, homooligomer, forming a rod-shaped structure 24 nm in length that may arise through a double-helical assembly of subunits. Interacts with CRY4; CRY4 seems to be associated with the outside of the rod-shaped homooligomer. Does not interact with CRY1 or CRY2. Detected in retina, especially in the retinal ganglion layer, the inner nuclear layer and the outer nuclear layer. Detected in retina visual pigment cells (at protein level).

It localises to the mitochondrion. Functionally, involved in the maturation of mitochondrial 4Fe-4S proteins functioning late in the iron-sulfur cluster assembly pathway. Probably involved in the binding of an intermediate of Fe/S cluster assembly. Component of a putative magnetoreceptor complex formed by ISCA1 and CRY4, a member of the cryptochrome family that are known to be required for light-dependent magnetosensitivity in various orgnisms. The rod-like assembly may facilitate the perception of the Earth's weak magnetic field. Both ISCA1 and the complex with CRY4 have magnetic properties and are attracted to iron beads. When exposed to a magnetic field of 1 mT (superior to the natural magnetic field), over 50% of the rod-like complexes align more or less in parallel with the magnetic field at room temperature. In Columba livia (Rock dove), this protein is Iron-sulfur cluster assembly 1 homolog, mitochondrial (ISCA1).